The sequence spans 373 residues: MAMTMIQLCYAGVTLFARATLVHGLSPRVFILYRQAFATIFIFPFLYLSRRKSKIAISSLDLKSFSLIFLVSLIGITINQNLYLEGLYLTSSSMGSAVGNIIPAITFLISFLAGYEKLNLRDIRGLAKIAGTILCVAGAISMTLLRGPKILNSESALPIAKSVLGHLKDQNTWLIGCLFLFSSTLCWSFWLILQVPISAYYPDNLSLSAWMCLFGTIQCAVVTFFLEKDPNAWILHSYSEFATCLYAGIGASALSFTVQAWAIAKRGPVFSALFNPLCTVIVTILAALFFHEEIYTGSLIGGLGVILGLYTVLWGKAKDVMMNQDQRDNDQKSEVKIHIEDSSNTTICNKDLKNPLLSKHKSTEEIQTHQQLY.

Helical transmembrane passes span 2–22 (AMTM…ATLV), 29–49 (VFIL…LYLS), 55–75 (IAIS…SLIG), 94–114 (MGSA…FLAG), 125–145 (GLAK…MTLL), 173–193 (WLIG…WLIL), 205–225 (LSLS…VTFF), 244–264 (CLYA…WAIA), 270–290 (FSAL…ALFF), and 294–314 (IYTG…TVLW). EamA domains are found at residues 9-135 (CYAG…TILC) and 186-313 (CWSF…YTVL).

Belongs to the drug/metabolite transporter (DMT) superfamily. Plant drug/metabolite exporter (P-DME) (TC 2.A.7.4) family.

Its subcellular location is the membrane. The chain is WAT1-related protein At4g30420 from Arabidopsis thaliana (Mouse-ear cress).